The sequence spans 463 residues: L-seryl-tRNA(Sec) selenium transferase (463 aa).

K295 bears the N6-(pyridoxal phosphate)lysine mark.

Belongs to the SelA family. As to quaternary structure, homodecamer; pentamer of dimers. Binds only one seryl-tRNA(Sec) per dimer. Requires pyridoxal 5'-phosphate as cofactor.

The protein localises to the cytoplasm. It carries out the reaction L-seryl-tRNA(Sec) + selenophosphate + H(+) = L-selenocysteinyl-tRNA(Sec) + phosphate. It functions in the pathway aminoacyl-tRNA biosynthesis; selenocysteinyl-tRNA(Sec) biosynthesis; selenocysteinyl-tRNA(Sec) from L-seryl-tRNA(Sec) (bacterial route): step 1/1. Its function is as follows. Converts seryl-tRNA(Sec) to selenocysteinyl-tRNA(Sec) required for selenoprotein biosynthesis. The polypeptide is L-seryl-tRNA(Sec) selenium transferase (Salmonella typhimurium (strain LT2 / SGSC1412 / ATCC 700720)).